Reading from the N-terminus, the 323-residue chain is SPbeta prophage-derived uncharacterized protein YorG (323 aa).

A coiled-coil region spans residues 222 to 272 (TAENLEKAIIEAVERQEQAEGIVAVTYEEQKQNNASEELDFNSLMDQIKEI).

The chain is SPbeta prophage-derived uncharacterized protein YorG (yorG) from Bacillus subtilis (strain 168).